The following is a 792-amino-acid chain: MSAIKSIATVLAAILPSVLAQANTSYADYNTEANPDLTPQSVATIDLSFPDCDNGPLSKTIVCDTLTSPYDRAAALISLFTLEELVNATGNTSPGVPRLGLPPYQVWNEALHGLDRAYFTDEGQFSWSTSFPMPILTMSALNRTLINQVASIISTQGRAFSNAGRYGLDVYSPNINSFRHPVWGRGQETPGEDAYCLSSAYAYEYITGIQGGVDPKSLKLVATAKHYAGYDIENWDGHSRLGNDMNITQQDLSEYYTPQFLVAARDAKVRSVMCSYNAVNGVPSCANSFFLQTLLRDTFGFVEDGYISSDCDSAYNVFNPHEYAANVSSAAADSIRAGTDIDCGTTYQYYFDEAVDQNLLSRADIERGVIRLYSNLMRLGYFDGNSSAYRNLTWNDVVTTNSWNISYEVEGTVLLKNDGTLPLSESIRSIALVGPWMNVSTQLQGNYFGPAPYLISPLDAFRDSHLDVNYAFGTNISSNSTDGFSKALSAAKKSDAIIFAGGIDNSLEAETLDRMNITWPGKQLELIDQLSQLGKPLIVLQMGGGQVDSSLLKSNKNVNSLIWGGYPGQSGGQALLDIITGKRAPAGRLVVTQYPAEYATQFPATDMSLRPHGNNPGQTYMWYTGTPVYEFGHGLFYTTFRVSHARAVKIKPTYNIQDLLAQPHPGYIHVEQMPFLNFTVDITNTGKASSDYTAMLFANTTAGPAPYPKKWLVGFDRLPTLGPSTSKLMTIPVTINSMARTDELGNRVLYPGKYELALNNERSVVLPLSLTGKPAVLSKWPLEEQLIPLAKS.

The first 20 residues, 1–20 (MSAIKSIATVLAAILPSVLA), serve as a signal peptide directing secretion. 4 N-linked (GlcNAc...) asparagine glycosylation sites follow: N23, N87, N142, and N246. Residue D310 is part of the active site. N326, N385, N391, N404, N438, N475, N479, N516, N677, and N699 each carry an N-linked (GlcNAc...) asparagine glycan.

The protein belongs to the glycosyl hydrolase 3 family.

Its subcellular location is the secreted. The catalysed reaction is Hydrolysis of (1-&gt;4)-beta-D-xylans, to remove successive D-xylose residues from the non-reducing termini.. Its pathway is glycan degradation; xylan degradation. Functionally, xylan 1,4-beta-xylosidase involved in the hydrolysis of xylan, a major structural heterogeneous polysaccharide found in plant biomass representing the second most abundant polysaccharide in the biosphere, after cellulose. The protein is Probable exo-1,4-beta-xylosidase xlnD (xlnD) of Aspergillus clavatus (strain ATCC 1007 / CBS 513.65 / DSM 816 / NCTC 3887 / NRRL 1 / QM 1276 / 107).